The sequence spans 80 residues: Putative defensin-like protein 15 (80 aa).

An N-terminal signal peptide occupies residues 1–29 (MAKFASIITFIYAALVLFAAFEVPTMVEA). At Q30 the chain carries Pyrrolidone carboxylic acid. Cystine bridges form between C33–C80, C44–C65, C50–C74, and C54–C76.

Belongs to the DEFL family.

It localises to the secreted. Confers broad-spectrum resistance to pathogens. The chain is Putative defensin-like protein 15 (PDF1.2B) from Arabidopsis thaliana (Mouse-ear cress).